The chain runs to 467 residues: Argininosuccinate lyase (467 aa).

2-(N(omega)-L-arginino)succinate contacts are provided by Ser-27, Asn-114, and Thr-159. The active-site Proton acceptor is the His-160. Ser-281 acts as the Proton donor in catalysis. 2-(N(omega)-L-arginino)succinate-binding residues include Asn-289, Tyr-321, Gln-326, and Lys-329.

The protein belongs to the lyase 1 family. Argininosuccinate lyase subfamily. As to quaternary structure, homotetramer.

The enzyme catalyses 2-(N(omega)-L-arginino)succinate = fumarate + L-arginine. It participates in amino-acid biosynthesis; L-arginine biosynthesis; L-arginine from L-ornithine and carbamoyl phosphate: step 3/3. The protein operates within nitrogen metabolism; urea cycle; L-arginine and fumarate from (N(omega)-L-arginino)succinate: step 1/1. In Aquarana catesbeiana (American bullfrog), this protein is Argininosuccinate lyase (ASL).